Consider the following 368-residue polypeptide: Glutamine synthetase root isozyme 2 (368 aa).

Positions Ile-19 to Gly-99 constitute a GS beta-grasp domain. The interval Arg-38 to Asp-66 is disordered. Positions Lys-106–Pro-368 constitute a GS catalytic domain.

The protein belongs to the glutamine synthetase family. In terms of assembly, homooctamer. Found mainly in the vascular tissues of seedling roots.

The protein localises to the cytoplasm. The enzyme catalyses L-glutamate + NH4(+) + ATP = L-glutamine + ADP + phosphate + H(+). Plays a role in the flow of nitrogen into nitrogenous organic compounds. This Zea mays (Maize) protein is Glutamine synthetase root isozyme 2 (GLN2).